Reading from the N-terminus, the 460-residue chain is Phosphomethylpyrimidine synthase (460 aa).

Substrate contacts are provided by residues Asn80, Met109, Tyr139, His175, 195–197 (SRG), 236–239 (DSLR), and Glu275. Zn(2+) is bound at residue His279. Tyr302 contributes to the substrate binding site. His343 is a binding site for Zn(2+). Positions 423, 426, and 431 each coordinate [4Fe-4S] cluster.

Belongs to the ThiC family. Requires [4Fe-4S] cluster as cofactor.

It carries out the reaction 5-amino-1-(5-phospho-beta-D-ribosyl)imidazole + S-adenosyl-L-methionine = 4-amino-2-methyl-5-(phosphooxymethyl)pyrimidine + CO + 5'-deoxyadenosine + formate + L-methionine + 3 H(+). It participates in cofactor biosynthesis; thiamine diphosphate biosynthesis. Its function is as follows. Catalyzes the synthesis of the hydroxymethylpyrimidine phosphate (HMP-P) moiety of thiamine from aminoimidazole ribotide (AIR) in a radical S-adenosyl-L-methionine (SAM)-dependent reaction. The polypeptide is Phosphomethylpyrimidine synthase (Microcystis aeruginosa (strain NIES-843 / IAM M-2473)).